A 276-amino-acid chain; its full sequence is Rhomboid protease GlpG (276 aa).

The next 6 membrane-spanning stretches (helical) occupy residues 94–114, 142–162, 169–189, 192–212, 229–249, and 250–270; these read GPVTWVMMIACVVVFIAMQIL, ALMHFSLMHILFNLLWWWYLG, LGSGKLIVITLISALLSGYVQ, FSGPWFGGLSGVVYALMGYVW, LIIFALIWIVAGWFDLFGMSM, and ANGAHIAGLAVGLAMAFVDSL. The active-site Nucleophile is Ser201. His254 is an active-site residue.

This sequence belongs to the peptidase S54 family.

It localises to the cell inner membrane. The catalysed reaction is Cleaves type-1 transmembrane domains using a catalytic dyad composed of serine and histidine that are contributed by different transmembrane domains.. Functionally, rhomboid-type serine protease that catalyzes intramembrane proteolysis. The protein is Rhomboid protease GlpG of Shigella flexneri serotype 5b (strain 8401).